Reading from the N-terminus, the 403-residue chain is Accessory Sec system protein translocase subunit SecY2 (403 aa).

Helical transmembrane passes span 17–37, 63–83, 105–125, 131–151, 157–177, 186–206, 240–260, 276–296, 339–359, and 366–386; these read MLYTCFILFIYILGTNISIVS, LNIFTLGLVPWLTSMIILMLI, ILTLILSVIQSYFVIHEYVSK, DNIYLTILILVTGTMLLVWLA, YGIAGPMPIVMVSIIKSMMHQ, HIVIALLIILVIITLFILLFI, ITLMMSISAFVFLKSGIHFIL, FDSPVGISVYLVIQMLLGYFL, WFGSALVTVIIGIPLYFTLFV, and IYFSVQLIVLVYISINIAETI.

The protein belongs to the SecY/SEC61-alpha family. SecY2 subfamily. Component of the accessory SecA2/SecY2 protein translocase complex required to export cell wall proteins. May form heterotrimers with SecE and SecG subunits.

It is found in the cell membrane. Part of the accessory SecA2/SecY2 system specifically required for export of possible cell wall proteins. The central subunit of a protein translocation channel. In Staphylococcus aureus (strain N315), this protein is Accessory Sec system protein translocase subunit SecY2.